A 94-amino-acid chain; its full sequence is Pyrimidine/purine nucleoside phosphorylase (94 aa).

It belongs to the nucleoside phosphorylase PpnP family.

It carries out the reaction a purine D-ribonucleoside + phosphate = a purine nucleobase + alpha-D-ribose 1-phosphate. It catalyses the reaction adenosine + phosphate = alpha-D-ribose 1-phosphate + adenine. The enzyme catalyses cytidine + phosphate = cytosine + alpha-D-ribose 1-phosphate. The catalysed reaction is guanosine + phosphate = alpha-D-ribose 1-phosphate + guanine. It carries out the reaction inosine + phosphate = alpha-D-ribose 1-phosphate + hypoxanthine. It catalyses the reaction thymidine + phosphate = 2-deoxy-alpha-D-ribose 1-phosphate + thymine. The enzyme catalyses uridine + phosphate = alpha-D-ribose 1-phosphate + uracil. The catalysed reaction is xanthosine + phosphate = alpha-D-ribose 1-phosphate + xanthine. Its function is as follows. Catalyzes the phosphorolysis of diverse nucleosides, yielding D-ribose 1-phosphate and the respective free bases. Can use uridine, adenosine, guanosine, cytidine, thymidine, inosine and xanthosine as substrates. Also catalyzes the reverse reactions. The sequence is that of Pyrimidine/purine nucleoside phosphorylase from Vibrio campbellii (strain ATCC BAA-1116).